The primary structure comprises 338 residues: Nucleoid-associated protein CGSHiGG_07705 (338 aa).

Belongs to the YejK family.

The protein resides in the cytoplasm. It localises to the nucleoid. The protein is Nucleoid-associated protein CGSHiGG_07705 of Haemophilus influenzae (strain PittGG).